Here is a 266-residue protein sequence, read N- to C-terminus: Hydroxyacylglutathione hydrolase (266 aa).

Residues H53, H55, D57, H58, H118, D140, and H178 each contribute to the Zn(2+) site.

The protein belongs to the metallo-beta-lactamase superfamily. Glyoxalase II family. As to quaternary structure, monomer. The cofactor is Zn(2+).

It catalyses the reaction an S-(2-hydroxyacyl)glutathione + H2O = a 2-hydroxy carboxylate + glutathione + H(+). It functions in the pathway secondary metabolite metabolism; methylglyoxal degradation; (R)-lactate from methylglyoxal: step 2/2. In terms of biological role, thiolesterase that catalyzes the hydrolysis of S-D-lactoyl-glutathione to form glutathione and D-lactic acid. The chain is Hydroxyacylglutathione hydrolase from Cupriavidus taiwanensis (strain DSM 17343 / BCRC 17206 / CCUG 44338 / CIP 107171 / LMG 19424 / R1) (Ralstonia taiwanensis (strain LMG 19424)).